Reading from the N-terminus, the 230-residue chain is uncharacterized protein (230 aa).

Residues 93–115 form a helical membrane-spanning segment; that stretch reads VFLYYFLIVYTSGNVDLISRFLF.

This sequence belongs to the DUP/COS family.

Its subcellular location is the membrane. This is an uncharacterized protein from Saccharomyces cerevisiae (strain ATCC 204508 / S288c) (Baker's yeast).